The following is a 313-amino-acid chain: Ribosomal RNA small subunit methyltransferase H (313 aa).

S-adenosyl-L-methionine-binding positions include 35–37, Asp-55, Phe-79, Asp-100, and Gln-107; that span reads GGH.

Belongs to the methyltransferase superfamily. RsmH family.

It localises to the cytoplasm. It carries out the reaction cytidine(1402) in 16S rRNA + S-adenosyl-L-methionine = N(4)-methylcytidine(1402) in 16S rRNA + S-adenosyl-L-homocysteine + H(+). Functionally, specifically methylates the N4 position of cytidine in position 1402 (C1402) of 16S rRNA. This Burkholderia orbicola (strain AU 1054) protein is Ribosomal RNA small subunit methyltransferase H.